The sequence spans 261 residues: Potassium/proton antiporter CemA (261 aa).

The next 2 helical transmembrane spans lie at 47 to 67 and 138 to 158; these read FLVF…GPWV and IISH…YFIM.

It belongs to the CemA family.

The protein resides in the plastid. It is found in the chloroplast inner membrane. It carries out the reaction K(+)(in) + H(+)(out) = K(+)(out) + H(+)(in). Contributes to K(+)/H(+) antiport activity by supporting proton efflux to control proton extrusion and homeostasis in chloroplasts in a light-dependent manner to modulate photosynthesis. Prevents excessive induction of non-photochemical quenching (NPQ) under continuous-light conditions. Indirectly promotes efficient inorganic carbon uptake into chloroplasts. The sequence is that of Potassium/proton antiporter CemA from Ginkgo biloba (Ginkgo).